We begin with the raw amino-acid sequence, 245 residues long: Pyridoxine 5'-phosphate synthase (245 aa).

Position 9 (Asn-9) interacts with 3-amino-2-oxopropyl phosphate. 11 to 12 (DH) is a binding site for 1-deoxy-D-xylulose 5-phosphate. Residue Arg-20 coordinates 3-amino-2-oxopropyl phosphate. The active-site Proton acceptor is His-45. 1-deoxy-D-xylulose 5-phosphate contacts are provided by Arg-47 and His-52. Glu-72 (proton acceptor) is an active-site residue. Thr-102 provides a ligand contact to 1-deoxy-D-xylulose 5-phosphate. His-193 (proton donor) is an active-site residue. 3-amino-2-oxopropyl phosphate contacts are provided by residues Gly-194 and 215–216 (GH).

The protein belongs to the PNP synthase family. As to quaternary structure, homooctamer; tetramer of dimers.

It is found in the cytoplasm. The enzyme catalyses 3-amino-2-oxopropyl phosphate + 1-deoxy-D-xylulose 5-phosphate = pyridoxine 5'-phosphate + phosphate + 2 H2O + H(+). Its pathway is cofactor biosynthesis; pyridoxine 5'-phosphate biosynthesis; pyridoxine 5'-phosphate from D-erythrose 4-phosphate: step 5/5. In terms of biological role, catalyzes the complicated ring closure reaction between the two acyclic compounds 1-deoxy-D-xylulose-5-phosphate (DXP) and 3-amino-2-oxopropyl phosphate (1-amino-acetone-3-phosphate or AAP) to form pyridoxine 5'-phosphate (PNP) and inorganic phosphate. The sequence is that of Pyridoxine 5'-phosphate synthase from Shewanella oneidensis (strain ATCC 700550 / JCM 31522 / CIP 106686 / LMG 19005 / NCIMB 14063 / MR-1).